Here is a 669-residue protein sequence, read N- to C-terminus: Beta-galactosidase (669 aa).

The N-terminal stretch at 1 to 24 (MDFPGAARLLSLLLVPLLLGPARG) is a signal peptide. A propeptide spanning residues 25-29 (LRNAS) is cleaved from the precursor. N-linked (GlcNAc...) asparagine glycosylation is present at asparagine 27. 3 residues coordinate substrate: tyrosine 84, glutamate 130, and asparagine 188. The active-site Proton donor is the glutamate 189. Cysteine 196 and cysteine 231 form a disulfide bridge. N-linked (GlcNAc...) asparagine glycosylation occurs at asparagine 248. Glutamate 269 acts as the Nucleophile in catalysis. Residue tyrosine 334 participates in substrate binding. Residues asparagine 465, asparagine 499, asparagine 547, and asparagine 557 are each glycosylated (N-linked (GlcNAc...) asparagine). Cysteine 628 and cysteine 636 are joined by a disulfide. The tract at residues 649-669 (TPTSSHPLPDLSDRDSGWDRV) is disordered. A compositionally biased stretch (basic and acidic residues) spans 659–669 (LSDRDSGWDRV).

This sequence belongs to the glycosyl hydrolase 35 family. As to quaternary structure, homodimer. May form higher multimers.

It localises to the lysosome. The catalysed reaction is Hydrolysis of terminal non-reducing beta-D-galactose residues in beta-D-galactosides.. Cleaves beta-linked terminal galactosyl residues from gangliosides, glycoproteins, and glycosaminoglycans. This is Beta-galactosidase (GLB1) from Felis catus (Cat).